The primary structure comprises 607 residues: Transporter aclS (607 aa).

12 helical membrane passes run Leu-67–Leu-87, Ile-91–Pro-111, Leu-152–Leu-172, Val-192–Tyr-212, Leu-221–Leu-241, Ser-262–Leu-282, Val-317–Leu-337, Ala-364–Asp-384, Gly-423–Ala-443, Thr-445–Ile-465, Gly-500–Asn-520, and His-531–Val-551. Residues Asn-583–Val-607 form a disordered region. Residues Asp-592–Val-607 show a composition bias toward basic and acidic residues.

This sequence belongs to the purine-cytosine permease (2.A.39) family.

The protein resides in the membrane. Its function is as follows. Transporter; part of the gene cluster that mediates the biosynthesis of aspirochlorine (or antibiotic A30641), an unusual halogenated spiro compound with distinctive antifungal properties due to selective inhibition of protein biosynthesis, and which is also active against bacteria, viruses, and murine tumor cells. The protein is Transporter aclS of Aspergillus oryzae (strain ATCC 42149 / RIB 40) (Yellow koji mold).